A 440-amino-acid chain; its full sequence is Ran-specific GTPase-activating protein 30 (440 aa).

The 314-residue stretch at 1 to 314 (MDEILAKAGS…LVLKIDRSDD (314 aa)) folds into the RanBD1 domain. T272 carries the post-translational modification Phosphothreonine. The span at 341-371 (IEEDEEEDEEEDEEEGKDGEERKEEEEEENK) shows a compositional bias: acidic residues. Positions 341–375 (IEEDEEEDEEEDEEEGKDGEERKEEEEEENKLEDK) are disordered.

As to quaternary structure, interacts with GSP1.

The protein resides in the cytoplasm. It localises to the nucleus. Its function is as follows. Important for the export of protein containing nuclear export signal (NES) out of the nucleus. Stimulates the GTPase activity of GSP1. The sequence is that of Ran-specific GTPase-activating protein 30 (YRB30) from Saccharomyces cerevisiae (strain ATCC 204508 / S288c) (Baker's yeast).